The chain runs to 28 residues: Ranatuerin-2AVa (28 aa).

Cys23 and Cys28 form a disulfide bridge.

Expressed by the skin glands.

It is found in the secreted. Has antibacterial activity against the Gram positive bacterium L.lactis. The sequence is that of Ranatuerin-2AVa from Rana arvalis (Moor frog).